A 67-amino-acid polypeptide reads, in one-letter code: Large ribosomal subunit protein bL35 (67 aa).

The protein belongs to the bacterial ribosomal protein bL35 family.

The protein is Large ribosomal subunit protein bL35 of Dehalococcoides mccartyi (strain ATCC BAA-2100 / JCM 16839 / KCTC 5957 / BAV1).